We begin with the raw amino-acid sequence, 202 residues long: MPTPTKGPRLGGGPAHEKLILANLATALFEHRSITTTEAKAKRLRPHAEKLISFAKKGDLASRRQVMKTIRDKSVVHFLFTEIGPAMAERNGGYTRIVKIGPRKGDNAPMAVIQLVMEPVSAKQGVVREAERAAAVSAPAADEVVVGDEAPAAESTDAAQVEAGGVEQPDTLPDADAPATADEGVEVDAAEVDPSDEKKDQA.

Residues 148 to 202 (DEAPAAESTDAAQVEAGGVEQPDTLPDADAPATADEGVEVDAAEVDPSDEKKDQA) form a disordered region. The segment covering 169-182 (PDTLPDADAPATAD) has biased composition (low complexity). Over residues 183–194 (EGVEVDAAEVDP) the composition is skewed to acidic residues.

This sequence belongs to the bacterial ribosomal protein bL17 family. In terms of assembly, part of the 50S ribosomal subunit. Contacts protein L32.

The protein is Large ribosomal subunit protein bL17 of Kineococcus radiotolerans (strain ATCC BAA-149 / DSM 14245 / SRS30216).